A 486-amino-acid chain; its full sequence is BTB/POZ domain and ankyrin repeat-containing protein NBCL (486 aa).

The 91-residue stretch at 25 to 115 (SDVTFSVEGR…LYSGQVSIVP (91 aa)) folds into the BTB domain. A C2HC NPR-type zinc finger spans residues 121-135 (RPNCGERGCWHTHCS). Positions 124, 129, 131, and 134 each coordinate Zn(2+). 4 ANK repeats span residues 257-286 (QKIR…LNLD), 287-316 (EALA…DVNY), 321-350 (AGKT…DPNV), and 354-388 (DNVT…KLRL). Disordered stretches follow at residues 403-441 (EEGN…NNHN) and 464-486 (QMSD…HHDY). Composition is skewed to low complexity over residues 406–418 (NANN…TTTT) and 432–441 (SSSSSGNNHN). Positions 466–475 (SDDHGGRHGD) are enriched in basic and acidic residues.

The protein belongs to the plant 'ANKYRIN-BTB/POZ' family. 'NOOT-BOP-COCH-like' (NBCL) subfamily. In terms of assembly, homodimer.

It is found in the nucleus. The protein resides in the cytoplasm. It localises to the cell membrane. It participates in protein modification; protein ubiquitination. May act as a substrate-specific adapter of an E3 ubiquitin-protein ligase complex (CUL3-RBX1-BTB) which mediates the ubiquitination and subsequent proteasomal degradation of target proteins. Transcriptional co-regulator involved in the promotion of leaf and floral meristem fate and determinacy. Necessary for the development of stipules at the base of petioles. Required for the abscission of senescent organs, probably by regulating the cell wall disorganization in abscission zones (AZs, e.g. pulvini at the base of leaves). Promotes slightly root-cap border cells separation from the root tip. Involved in the coordination of the symbiotic nodule developmental program; promotes the formation of root nodules by interacting directly with APP1 to modulate the expression of the nuclear transcription factor Y subunit (NF-YA1), a key nodulin. Necessary for the robust maintenance of nodule identity throughout the nodule developmental program. This is BTB/POZ domain and ankyrin repeat-containing protein NBCL from Lupinus angustifolius (Narrow-leaved blue lupine).